Reading from the N-terminus, the 279-residue chain is Acetylglutamate kinase (279 aa).

Substrate is bound by residues 64 to 65, arginine 86, and asparagine 177; that span reads GG.

This sequence belongs to the acetylglutamate kinase family. ArgB subfamily.

It localises to the cytoplasm. It catalyses the reaction N-acetyl-L-glutamate + ATP = N-acetyl-L-glutamyl 5-phosphate + ADP. It participates in amino-acid biosynthesis; L-arginine biosynthesis; N(2)-acetyl-L-ornithine from L-glutamate: step 2/4. Catalyzes the ATP-dependent phosphorylation of N-acetyl-L-glutamate. The chain is Acetylglutamate kinase from Campylobacter jejuni subsp. jejuni serotype O:2 (strain ATCC 700819 / NCTC 11168).